A 193-amino-acid chain; its full sequence is GYLSLPADTPEVAAAKVAHFAAYNAAAARSAGVVAVAPSYGYAAYGPANIVIGADGVPLDTPEVAARKAADAVAHARAAAGLPAVGPVPAAVVPAVVGSVPADTPEVAAAKVAHAAAHVEANVRNAAEAVGIHGLYGVVPSVYSYGVVPGAYSVHYDGTLLTPDGVPLDTPAVAAGKVANAVAHIKAKSGLIV.

Component of the cuticle of migratory locust which contains more than 100 different structural proteins. This Locusta migratoria (Migratory locust) protein is Cuticle protein 18.7.